A 764-amino-acid polypeptide reads, in one-letter code: MASSTIVLLLFLSFPFISFAASQAAKTFIFRIDGGSMPSIFPTHYHWYSTEFAEESRIVHVYHTVFHGFSAVVTPDEADNLRNHPAVLAVFEDRRRELHTTRSPQFLGLQNQKGLWSESDYGSDVIIGVFDTGIWPERRSFSDLNLGPIPKRWRGVCESGARFSPRNCNRKIIGARFFAKGQQAAVIGGINKTVEFLSPRDADGHGTHTSSTAAGRHAFKASMSGYASGVAKGVAPKARIAAYKVCWKDSGCLDSDILAAFDAAVRDGVDVISISIGGGDGITSPYYLDPIAIGSYGAASKGIFVSSSAGNEGPNGMSVTNLAPWVTTVGASTIDRNFPADAILGDGHRLRGVSLYAGVPLNGRMFPVVYPGKSGMSSASLCMENTLDPKQVRGKIVICDRGSSPRVAKGLVVKKAGGVGMILANGASNGEGLVGDAHLIPACAVGSNEGDRIKAYASSHPNPIASIDFRGTIVGIKPAPVIASFSGRGPNGLSPEILKPDLIAPGVNILAAWTDAVGPTGLPSDPRKTEFNILSGTSMACPHVSGAAALLKSAHPDWSPAVIRSAMMTTTNLVDNSNRSLIDESTGKSATPYDYGSGHLNLGRAMNPGLVYDITNDDYITFLCSIGYGPKTIQVITRTPVRCPTTRKPSPGNLNYPSITAVFPTNRRGLVSKTVIRTATNVGQAEAVYRARIESPRGVTVTVKPPRLVFTSAVKRRSYAVTVTVNTRNVVLGETGAVFGSVTWFDGGKHVVRSPIVVTQMDTL.

An N-terminal signal peptide occupies residues 1 to 20 (MASSTIVLLLFLSFPFISFA). An Inhibitor I9 domain is found at 46–99 (HWYSTEFAEESRIVHVYHTVFHGFSAVVTPDEADNLRNHPAVLAVFEDRRRELH). The 504-residue stretch at 103–606 (SPQFLGLQNQ…SGHLNLGRAM (504 aa)) folds into the Peptidase S8 domain. Catalysis depends on aspartate 131, which acts as the Charge relay system. An N-linked (GlcNAc...) asparagine glycan is attached at asparagine 191. Catalysis depends on histidine 205, which acts as the Charge relay system. Residues 377–457 (SSASLCMENT…NEGDRIKAYA (81 aa)) enclose the PA domain. The active-site Charge relay system is the serine 538. Residue asparagine 578 is glycosylated (N-linked (GlcNAc...) asparagine).

This sequence belongs to the peptidase S8 family. As to expression, expressed in roots, leaves and flowers of mature plants.

In Arabidopsis thaliana (Mouse-ear cress), this protein is Subtilisin-like protease SBT1.6.